The primary structure comprises 136 residues: uncharacterized protein (136 aa).

It localises to the cytoplasm. Its subcellular location is the nucleus. This is an uncharacterized protein from Schizosaccharomyces pombe (strain 972 / ATCC 24843) (Fission yeast).